We begin with the raw amino-acid sequence, 523 residues long: Effector protein hopAB1 (523 aa).

Disordered stretches follow at residues 1–94, 165–223, and 299–320; these read MPGI…EAQQ, VRQQ…QGLD, and RQTT…SGRR. Positions 18 to 31 are enriched in basic and acidic residues; sequence TDGEPVTEREHDSS. Residues 181 to 194 are compositionally biased toward low complexity; that stretch reads SSSGSSQRSLIGRS.

The protein belongs to the HopAB family.

It localises to the secreted. Effector protein that plays different roles depending on the species and plant cultivars that interact with the pathogen. Acts as a virulence determinant by enhancing the development of disease symptoms and bacterial growth. Acts as an avirulence factor by eliciting hypersensitive response (HR) and plant resistance. In Pseudomonas savastanoi pv. glycinea (Pseudomonas syringae pv. glycinea), this protein is Effector protein hopAB1 (hopAB1).